Reading from the N-terminus, the 443-residue chain is Exodeoxyribonuclease 7 large subunit (443 aa).

The protein belongs to the XseA family. As to quaternary structure, heterooligomer composed of large and small subunits.

It is found in the cytoplasm. The enzyme catalyses Exonucleolytic cleavage in either 5'- to 3'- or 3'- to 5'-direction to yield nucleoside 5'-phosphates.. In terms of biological role, bidirectionally degrades single-stranded DNA into large acid-insoluble oligonucleotides, which are then degraded further into small acid-soluble oligonucleotides. The protein is Exodeoxyribonuclease 7 large subunit of Legionella pneumophila (strain Lens).